The primary structure comprises 138 residues: Large-conductance mechanosensitive channel (138 aa).

Transmembrane regions (helical) follow at residues 15–35 (VDLA…NSIV), 38–58 (IIMP…MFIQ), and 80–100 (GNFI…FLVV).

The protein belongs to the MscL family. Homopentamer.

Its subcellular location is the cell inner membrane. Functionally, channel that opens in response to stretch forces in the membrane lipid bilayer. May participate in the regulation of osmotic pressure changes within the cell. The polypeptide is Large-conductance mechanosensitive channel (Brucella canis (strain ATCC 23365 / NCTC 10854 / RM-666)).